Here is a 910-residue protein sequence, read N- to C-terminus: Protein translocase subunit SecA (910 aa).

Residues glutamine 86, 104–108 (GEGKT), and aspartate 499 each bind ATP. Cysteine 894, cysteine 896, cysteine 905, and histidine 906 together coordinate Zn(2+).

The protein belongs to the SecA family. As to quaternary structure, monomer and homodimer. Part of the essential Sec protein translocation apparatus which comprises SecA, SecYEG and auxiliary proteins SecDF-YajC and YidC. The cofactor is Zn(2+).

It localises to the cell inner membrane. It is found in the cytoplasm. It carries out the reaction ATP + H2O + cellular proteinSide 1 = ADP + phosphate + cellular proteinSide 2.. In terms of biological role, part of the Sec protein translocase complex. Interacts with the SecYEG preprotein conducting channel. Has a central role in coupling the hydrolysis of ATP to the transfer of proteins into and across the cell membrane, serving both as a receptor for the preprotein-SecB complex and as an ATP-driven molecular motor driving the stepwise translocation of polypeptide chains across the membrane. This is Protein translocase subunit SecA from Rickettsia bellii (strain RML369-C).